The sequence spans 146 residues: PTS system fructose-specific EIIA component (146 aa).

The region spanning 1-124 is the PTS EIIA type-4 domain; it reads MISVIISGHG…NLKAMSQQSF (124 aa). Catalysis depends on His9, which acts as the Tele-phosphohistidine intermediate. Residue His9 is modified to Phosphohistidine; by HPr.

Its subcellular location is the cytoplasm. Functionally, the phosphoenolpyruvate-dependent sugar phosphotransferase system (sugar PTS), a major carbohydrate active transport system, catalyzes the phosphorylation of incoming sugar substrates concomitantly with their translocation across the cell membrane. The enzyme II LevDE PTS system is involved in fructose transport. LevD and LevE act as negative regulators of the levanase operon. They may be involved in a PTS-mediated phosphorylation of a regulator. This Bacillus subtilis (strain 168) protein is PTS system fructose-specific EIIA component.